A 920-amino-acid polypeptide reads, in one-letter code: B3 domain-containing protein REM17 (920 aa).

3 DNA-binding regions (TF-B3) span residues 12–105, 153–250, and 267–361; these read NPHF…LGPS, RFVA…CRAK, and CFEG…LCPT. Disordered stretches follow at residues 405–438, 540–562, and 585–614; these read DDDQ…SSFV, LACS…KNTS, and DDDQ…SSDH. Over residues 423–432 the composition is skewed to basic and acidic residues; the sequence is NPREKVESSS. A DNA-binding region (TF-B3 4) is located at residues 436–531; the sequence is SFVGSVNPSS…NKPVLSLCPT (96 aa). DNA-binding regions (TF-B3) lie at residues 616–714 and 727–823; these read SFVA…SLSE and YFVG…LCPA. The segment covering 842-852 has biased composition (low complexity); sequence NSLSSNPSSGD. Residues 842-870 are disordered; that stretch reads NSLSSNPSSGDDSSRSEESEEENMEDKNI.

The protein resides in the nucleus. This chain is B3 domain-containing protein REM17 (REM17), found in Arabidopsis thaliana (Mouse-ear cress).